The primary structure comprises 637 residues: Transmembrane 9 superfamily member 10 (637 aa).

Positions 1–23 are cleaved as a signal peptide; it reads MAKVRILIFTLVLFFSLNVHIHG. The Lumenal segment spans residues 24-274; sequence FYLPGVAPQD…YLLMADDQIH (251 aa). The helical transmembrane segment at 275–295 threads the bilayer; sequence WFSIVNSMMIVLFLSGMVAMI. At 296-344 the chain is on the cytoplasmic side; it reads MLRTLYRDISNYNQLESHEEALEETGWKLVHGDVFRPPTNPELLCVYAG. The helical transmembrane segment at 345–365 threads the bilayer; the sequence is TGVQCFGMILVTMIFACLGFL. The Lumenal segment spans residues 366–370; it reads SPSNR. The chain crosses the membrane as a helical span at residues 371-391; sequence GGLMTAMLLLWVFMGLLAGYA. The Cytoplasmic segment spans residues 392–411; the sequence is SSRLYKTLRGTEWKRNALKT. A helical transmembrane segment spans residues 412–432; it reads AFMFPATVFVAFFVLNAIIWG. Over 433-444 the chain is Lumenal; sequence QKSSGAVPFGTM. The chain crosses the membrane as a helical span at residues 445–465; sequence FALVVLWFGISVPLVFIGGYI. At 466–494 the chain is on the cytoplasmic side; that stretch reads GFRKPAPEDPVKTNKIPRQIPTQAWYMNP. The helical transmembrane segment at 495–515 threads the bilayer; it reads IFSILIGGILPFGAVFIELFF. The Lumenal portion of the chain corresponds to 516–527; that stretch reads ILTSIWLHQFYY. Residues 528-548 traverse the membrane as a helical segment; that stretch reads IFGFLFIVFIILIITCAEITV. Topologically, residues 549 to 566 are cytoplasmic; that stretch reads VLCYFQLCSEDYQWWWRS. Residues 567-587 form a helical membrane-spanning segment; it reads YLTSGSSAVYLFLYAVFYFYT. Residues 588–593 are Lumenal-facing; sequence KLEITK. A helical transmembrane segment spans residues 594-614; sequence LVSAVLYFGYMLIVSYVFFVF. Over 615 to 637 the chain is Cytoplasmic; the sequence is TGAIGFYACFWFTRLIYSSVKID. Residues 626 to 631 carry the Endoplasmic reticulum export signal motif; sequence FTRLIY. Residues 635-637 carry the Golgi retention signal motif; the sequence is KID.

It belongs to the nonaspanin (TM9SF) (TC 9.A.2) family.

Its subcellular location is the endosome membrane. The protein resides in the golgi apparatus membrane. This Arabidopsis thaliana (Mouse-ear cress) protein is Transmembrane 9 superfamily member 10.